The chain runs to 85 residues: Small ribosomal subunit protein bS20 (85 aa).

Belongs to the bacterial ribosomal protein bS20 family.

Functionally, binds directly to 16S ribosomal RNA. The chain is Small ribosomal subunit protein bS20 from Borreliella afzelii (strain PKo) (Borrelia afzelii).